The sequence spans 1029 residues: U2 snRNP-associated SURP motif-containing protein (1029 aa).

Disordered stretches follow at residues 1–111 (MADK…EDEK) and 141–274 (VNAA…PSTT). Alanine 2 bears the N-acetylalanine mark. Polar residues predominate over residues 7-16 (GGSQKASSKT). The segment covering 45–54 (TRPKSPRKHN) has biased composition (basic residues). A compositionally biased stretch (basic and acidic residues) spans 55 to 64 (YRNESARESL). Phosphoserine is present on serine 67. Lysine 80 is covalently cross-linked (Glycyl lysine isopeptide (Lys-Gly) (interchain with G-Cter in SUMO2)). Residues 92 to 121 (AKRTLSKKEQEELKKKEDEKAAAEIYEEFL) are a coiled coil. Basic and acidic residues-rich tracts occupy residues 97–111 (SKKEQEELKKKEDEK) and 144–155 (AKEEHETDEKRG). Glycyl lysine isopeptide (Lys-Gly) (interchain with G-Cter in SUMO2) cross-links involve residues lysine 145 and lysine 168. A compositionally biased stretch (polar residues) spans 169 to 178 (NPPNQSSNER). A compositionally biased stretch (basic and acidic residues) spans 186 to 222 (ETKKPPLKKGEKEKKKSNLELFKEELKQIQEERDERH). The stretch at 192–232 (LKKGEKEKKKSNLELFKEELKQIQEERDERHKTKGRLSRFE) forms a coiled coil. Serine 202 is modified (phosphoserine). Lysine 208 is covalently cross-linked (Glycyl lysine isopeptide (Lys-Gly) (interchain with G-Cter in SUMO2)). Serine 236 is subject to Phosphoserine. Positions 239–249 (DGQRRSMDAPS) are enriched in basic and acidic residues. The RRM domain maps to 274–355 (TNLYLGNINP…FEMKLGWGKA (82 aa)). Residues 430-473 (LIHRMIEFVVREGPMFEAMIMNREINNPMFRFLFENQTPAHVYY) form an SURP motif repeat. Serine 485 is modified (phosphoserine). One can recognise a CID domain in the interval 534–679 (LKEEQRDKLE…KLQNIFLGLV (146 aa)). Residue threonine 719 is modified to Phosphothreonine. Glycyl lysine isopeptide (Lys-Gly) (interchain with G-Cter in SUMO2) cross-links involve residues lysine 748 and lysine 749. An N6-acetyllysine; alternate modification is found at lysine 760. Residue lysine 760 forms a Glycyl lysine isopeptide (Lys-Gly) (interchain with G-Cter in SUMO2); alternate linkage. Disordered stretches follow at residues 778 to 841 (KWEL…EEKR) and 855 to 1029 (QDEL…KNKH). The span at 786–806 (EESEEEENQNQEEESEDEEDT) shows a compositional bias: acidic residues. Phosphoserine is present on residues serine 788, serine 800, and serine 811. Composition is skewed to basic and acidic residues over residues 810-841 (KSEEHHLYSNPIKEEMTESKFSKYSEMSEEKR) and 874-922 (QVEH…TPTR). Residues lysine 822, lysine 829, and lysine 832 each participate in a glycyl lysine isopeptide (Lys-Gly) (interchain with G-Cter in SUMO2) cross-link. Residues 837–915 (SEEKRAKLRE…ESRSKDKKEK (79 aa)) adopt a coiled-coil conformation. Position 931 is a phosphothreonine (threonine 931). 2 positions are modified to phosphoserine: serine 946 and serine 948. Basic and acidic residues predominate over residues 950–980 (KSERSERSERSHKESSRSRSSHKDSPRDVSK). The segment covering 991–1029 (TPKRSRRSRSRSPKKSGKKSRSQSRSPHRSHKKSKKNKH) has biased composition (basic residues).

This sequence belongs to the splicing factor SR family. Interacts with ERBB4.

The protein resides in the nucleus. The polypeptide is U2 snRNP-associated SURP motif-containing protein (U2SURP) (Homo sapiens (Human)).